Consider the following 638-residue polypeptide: ABC transporter G family member 12 (638 aa).

Residues 42–61 form a disordered region; that stretch reads KQEKAKKKNDTESSTGDMNT. The ABC transporter domain maps to 58–301; that stretch reads DMNTGVSTTI…SLGYPCPNNT (244 aa). 91-98 contributes to the ATP binding site; the sequence is GPSGSGKS. An ABC transmembrane type-2 domain is found at 374–633; that stretch reads GNFVARVGTA…WTSYLALHFL (260 aa). A run of 7 helical transmembrane segments spans residues 376 to 396, 410 to 430, 459 to 479, 484 to 504, 516 to 536, 544 to 564, and 612 to 632; these read FVAR…CFAG, TIFF…SLFL, TLIV…FAHL, GHFF…DFMI, MTFA…GFYV, SFGW…LVVN, and FGVV…ALHF.

This sequence belongs to the ABC transporter superfamily. ABCG family. Eye pigment precursor importer (TC 3.A.1.204) subfamily.

Its subcellular location is the membrane. The protein is ABC transporter G family member 12 (abcG12) of Dictyostelium discoideum (Social amoeba).